Here is a 515-residue protein sequence, read N- to C-terminus: 1-pyrroline-5-carboxylate dehydrogenase 1 (515 aa).

Catalysis depends on residues Glu-286 and Cys-320.

Belongs to the aldehyde dehydrogenase family. RocA subfamily.

The catalysed reaction is L-glutamate 5-semialdehyde + NAD(+) + H2O = L-glutamate + NADH + 2 H(+). The protein operates within amino-acid degradation; L-proline degradation into L-glutamate; L-glutamate from L-proline: step 2/2. In Halalkalibacterium halodurans (strain ATCC BAA-125 / DSM 18197 / FERM 7344 / JCM 9153 / C-125) (Bacillus halodurans), this protein is 1-pyrroline-5-carboxylate dehydrogenase 1 (rocA1).